The following is a 360-amino-acid chain: Phosphoserine aminotransferase (360 aa).

Arg-42 contacts L-glutamate. Positions 102, 152, 171, and 194 each coordinate pyridoxal 5'-phosphate. Lys-195 carries the N6-(pyridoxal phosphate)lysine modification. A pyridoxal 5'-phosphate-binding site is contributed by 237–238; sequence NT.

Belongs to the class-V pyridoxal-phosphate-dependent aminotransferase family. SerC subfamily. Homodimer. Pyridoxal 5'-phosphate is required as a cofactor.

Its subcellular location is the cytoplasm. The catalysed reaction is O-phospho-L-serine + 2-oxoglutarate = 3-phosphooxypyruvate + L-glutamate. The enzyme catalyses 4-(phosphooxy)-L-threonine + 2-oxoglutarate = (R)-3-hydroxy-2-oxo-4-phosphooxybutanoate + L-glutamate. Its pathway is amino-acid biosynthesis; L-serine biosynthesis; L-serine from 3-phospho-D-glycerate: step 2/3. It participates in cofactor biosynthesis; pyridoxine 5'-phosphate biosynthesis; pyridoxine 5'-phosphate from D-erythrose 4-phosphate: step 3/5. Catalyzes the reversible conversion of 3-phosphohydroxypyruvate to phosphoserine and of 3-hydroxy-2-oxo-4-phosphonooxybutanoate to phosphohydroxythreonine. The chain is Phosphoserine aminotransferase from Coxiella burnetii (strain RSA 493 / Nine Mile phase I).